We begin with the raw amino-acid sequence, 857 residues long: Autoinducer 2 sensor kinase/phosphatase LuxQ (857 aa).

Helical transmembrane passes span 14–34 and 283–303; these read IASF…VSVL and FWMA…RWWL. Residues 486 to 706 enclose the Histidine kinase domain; that stretch reads KMSHELRTPL…RFEIQLPIEL (221 aa). A Phosphohistidine; by autocatalysis modification is found at His-489. Residues 731–846 enclose the Response regulatory domain; the sequence is RVLLVEDNHT…TLHKALEHFK (116 aa). 4-aspartylphosphate is present on Asp-780.

Binds the complex formed by AI-2 and LuxP.

It is found in the cell inner membrane. It catalyses the reaction ATP + protein L-histidine = ADP + protein N-phospho-L-histidine.. Its function is as follows. At low cell density, in absence of AI-2 (autoinducer 2), LuxQ has a kinase activity and autophosphorylates on a histidine residue. The phosphoryl group is then transferred to an aspartate residue in the response regulator domain. The phosphoryl group is transferred to LuxU, and ultimately to LuxO. At high cell density, in the presence of AI-2, the kinase activity is inactivated, and the response regulator domain has a phosphatase activity. The protein is Autoinducer 2 sensor kinase/phosphatase LuxQ (luxQ) of Vibrio cholerae serotype O1 (strain ATCC 39315 / El Tor Inaba N16961).